Consider the following 274-residue polypeptide: Nitrogenase iron protein (274 aa).

An ATP-binding site is contributed by 8-15 (GKGGIGKS). C94 is a binding site for [4Fe-4S] cluster. R97 is modified (ADP-ribosylarginine; by dinitrogenase reductase ADP-ribosyltransferase). A [4Fe-4S] cluster-binding site is contributed by C129.

The protein belongs to the NifH/BchL/ChlL family. Homodimer. Requires [4Fe-4S] cluster as cofactor. Post-translationally, the reversible ADP-ribosylation of Arg-97 inactivates the nitrogenase reductase and regulates nitrogenase activity.

It catalyses the reaction N2 + 8 reduced [2Fe-2S]-[ferredoxin] + 16 ATP + 16 H2O = H2 + 8 oxidized [2Fe-2S]-[ferredoxin] + 2 NH4(+) + 16 ADP + 16 phosphate + 6 H(+). The key enzymatic reactions in nitrogen fixation are catalyzed by the nitrogenase complex, which has 2 components: the iron protein and the molybdenum-iron protein. The chain is Nitrogenase iron protein from Methanocella arvoryzae (strain DSM 22066 / NBRC 105507 / MRE50).